Reading from the N-terminus, the 232-residue chain is Ubiquinone biosynthesis O-methyltransferase (232 aa).

S-adenosyl-L-methionine-binding residues include arginine 36, glycine 55, aspartate 76, and leucine 120.

The protein belongs to the methyltransferase superfamily. UbiG/COQ3 family.

The catalysed reaction is a 3-demethylubiquinol + S-adenosyl-L-methionine = a ubiquinol + S-adenosyl-L-homocysteine + H(+). It catalyses the reaction a 3-(all-trans-polyprenyl)benzene-1,2-diol + S-adenosyl-L-methionine = a 2-methoxy-6-(all-trans-polyprenyl)phenol + S-adenosyl-L-homocysteine + H(+). It participates in cofactor biosynthesis; ubiquinone biosynthesis. In terms of biological role, O-methyltransferase that catalyzes the 2 O-methylation steps in the ubiquinone biosynthetic pathway. The chain is Ubiquinone biosynthesis O-methyltransferase from Pseudomonas aeruginosa (strain LESB58).